The primary structure comprises 430 residues: Cyclin-A2 (430 aa).

The residue at position 1 (Met-1) is an N-acetylmethionine. Disordered stretches follow at residues Met-1–Asp-80 and Glu-106–Ala-129. Position 5 is a phosphoserine (Ser-5). The span at Glu-107–Ser-120 shows a compositional bias: basic and acidic residues.

It belongs to the cyclin family. Cyclin AB subfamily. As to quaternary structure, interacts with the CDK1 and CDK2 protein kinases to form serine/threonine kinase holoenzyme complexes. Interacts with CDK1 (hyperphosphorylated form in G1 and underphosphorylated forms in S and G2). Interacts with CDK2; the interaction increases from G1 to G2. Interacts (associated with CDK2 but not with CDK1) with SCAPER; regulates the activity of CCNA2/CDK2 by transiently maintaining CCNA2 in the cytoplasm. Forms a ternary complex with CDK2 and CDKN1B; CDKN1B inhibits the kinase activity of CDK2 through conformational rearrangements. Interacts with INCA1. In terms of processing, polyubiquitinated via 'Lys-11'-linked ubiquitin by the anaphase-promoting complex (APC/C), leading to its degradation by the proteasome. Deubiquitinated and stabilized by USP37 enables entry into S phase. Ubiquitinated during the G1 phase by the SCF(FBXO31) complex, leading to its proteasomal degradation.

The protein localises to the nucleus. It is found in the cytoplasm. Its function is as follows. Cyclin which controls both the G1/S and the G2/M transition phases of the cell cycle. Functions through the formation of specific serine/threonine kinase holoenzyme complexes with the cyclin-dependent protein kinases CDK1 and CDK2. The cyclin subunit confers the substrate specificity of these complexes and differentially interacts with and activates CDK1 and CDK2 throughout the cell cycle. This chain is Cyclin-A2, found in Bos taurus (Bovine).